A 432-amino-acid polypeptide reads, in one-letter code: Glutamine synthetase, chloroplastic (432 aa).

Residues 79–159 (IIAEYIWIGG…VICDTYTPQG (81 aa)) enclose the GS beta-grasp domain. Positions 166-432 (KRHKAAQIFS…LAAQKLSLNV (267 aa)) constitute a GS catalytic domain.

It belongs to the glutamine synthetase family. In terms of assembly, homooctamer.

The protein resides in the plastid. Its subcellular location is the chloroplast. The enzyme catalyses L-glutamate + NH4(+) + ATP = L-glutamine + ADP + phosphate + H(+). In terms of biological role, the light-modulated chloroplast enzyme, encoded by a nuclear gene and expressed primarily in leaves, is responsible for the reassimilation of the ammonia generated by photorespiration. The protein is Glutamine synthetase, chloroplastic (GLN2) of Daucus carota (Wild carrot).